We begin with the raw amino-acid sequence, 142 residues long: Large ribosomal subunit protein uL11 (142 aa).

The protein belongs to the universal ribosomal protein uL11 family. Part of the ribosomal stalk of the 50S ribosomal subunit. Interacts with L10 and the large rRNA to form the base of the stalk. L10 forms an elongated spine to which L12 dimers bind in a sequential fashion forming a multimeric L10(L12)X complex. One or more lysine residues are methylated.

Functionally, forms part of the ribosomal stalk which helps the ribosome interact with GTP-bound translation factors. The sequence is that of Large ribosomal subunit protein uL11 from Pelotomaculum thermopropionicum (strain DSM 13744 / JCM 10971 / SI).